The sequence spans 547 residues: Vacuolar fusion protein MON1 homolog B (547 aa).

Methionine 1 is subject to N-acetylmethionine. A compositionally biased stretch (low complexity) spans 1-15 (MEVGGDTAAPAPGGA). Positions 1–106 (MEVGGDTAAP…GGDPSDEEWR (106 aa)) are disordered. Phosphoserine occurs at positions 59 and 61.

Belongs to the MON1/SAND family. As to quaternary structure, interacts with CCNT2; down-regulates CCNT2-mediated activation of viral promoters during herpes simplex virus 1/HHV-1 infection. Found in a complex with RMC1, CCZ1 MON1A and MON1B.

The polypeptide is Vacuolar fusion protein MON1 homolog B (MON1B) (Homo sapiens (Human)).